Here is a 337-residue protein sequence, read N- to C-terminus: Ketol-acid reductoisomerase (NADP(+)) (337 aa).

A KARI N-terminal Rossmann domain is found at 1–183 (MAIETLYDSD…GGARAGVIPT (183 aa)). Residues 26 to 29 (YGSQ), R49, S52, S54, and 84 to 87 (DTSQ) contribute to the NADP(+) site. H109 is a catalytic residue. Residue G135 participates in NADP(+) binding. The KARI C-terminal knotted domain occupies 184-329 (TFKDETETDL…SQLRDLMSWV (146 aa)). Mg(2+) is bound by residues D192, E196, E228, and E232. S253 contacts substrate.

The protein belongs to the ketol-acid reductoisomerase family. Mg(2+) is required as a cofactor.

It catalyses the reaction (2R)-2,3-dihydroxy-3-methylbutanoate + NADP(+) = (2S)-2-acetolactate + NADPH + H(+). It carries out the reaction (2R,3R)-2,3-dihydroxy-3-methylpentanoate + NADP(+) = (S)-2-ethyl-2-hydroxy-3-oxobutanoate + NADPH + H(+). It participates in amino-acid biosynthesis; L-isoleucine biosynthesis; L-isoleucine from 2-oxobutanoate: step 2/4. It functions in the pathway amino-acid biosynthesis; L-valine biosynthesis; L-valine from pyruvate: step 2/4. Its function is as follows. Involved in the biosynthesis of branched-chain amino acids (BCAA). Catalyzes an alkyl-migration followed by a ketol-acid reduction of (S)-2-acetolactate (S2AL) to yield (R)-2,3-dihydroxy-isovalerate. In the isomerase reaction, S2AL is rearranged via a Mg-dependent methyl migration to produce 3-hydroxy-3-methyl-2-ketobutyrate (HMKB). In the reductase reaction, this 2-ketoacid undergoes a metal-dependent reduction by NADPH to yield (R)-2,3-dihydroxy-isovalerate. The protein is Ketol-acid reductoisomerase (NADP(+)) of Corynebacterium aurimucosum (strain ATCC 700975 / DSM 44827 / CIP 107346 / CN-1) (Corynebacterium nigricans).